A 441-amino-acid chain; its full sequence is Sec-independent protein translocase protein TatCo (441 aa).

Positions 1–185 are disordered; sequence MADEERDAGL…LVGEAPESDQ (185 aa). Residues 13–22 show a composition bias toward acidic residues; it reads ADDETDASDD. Residues 51 to 62 are compositionally biased toward basic and acidic residues; sequence TPRDETVTHGSD. Residues 75 to 104 are compositionally biased toward acidic residues; it reads DNGDDSDSDTDAAPDDADDSATDSDADSDD. Residues 105 to 117 show a composition bias toward basic and acidic residues; the sequence is EPRLLADDEHTSH. 2 stretches are compositionally biased toward acidic residues: residues 122–138 and 164–173; these read TYDD…DPDA and EDADFDDEDV. 6 consecutive transmembrane segments (helical) span residues 200-220, 276-296, 317-337, 357-377, 395-415, and 416-436; these read LAVV…GADI, VAGL…TYLF, LVLA…AIFA, FNLI…PLFV, RLLF…DPTG, and MAPI…LAAL.

The protein belongs to the TatC family. In terms of assembly, forms a complex with TatA.

It is found in the cell membrane. Its function is as follows. Part of the twin-arginine translocation (Tat) system that transports large folded proteins containing a characteristic twin-arginine motif in their signal peptide across membranes. The protein is Sec-independent protein translocase protein TatCo of Haloferax volcanii (strain ATCC 29605 / DSM 3757 / JCM 8879 / NBRC 14742 / NCIMB 2012 / VKM B-1768 / DS2) (Halobacterium volcanii).